Here is a 293-residue protein sequence, read N- to C-terminus: 33 kDa chaperonin (293 aa).

Intrachain disulfides connect Cys-237-Cys-239 and Cys-271-Cys-274.

Belongs to the HSP33 family. In terms of processing, under oxidizing conditions two disulfide bonds are formed involving the reactive cysteines. Under reducing conditions zinc is bound to the reactive cysteines and the protein is inactive.

The protein resides in the cytoplasm. Its function is as follows. Redox regulated molecular chaperone. Protects both thermally unfolding and oxidatively damaged proteins from irreversible aggregation. Plays an important role in the bacterial defense system toward oxidative stress. The protein is 33 kDa chaperonin of Haemophilus influenzae (strain 86-028NP).